The sequence spans 492 residues: Vacuolar fusion protein CCZ1 homolog (492 aa).

The segment at 255-275 is disordered; sequence SVHAGPTSSSSNGTASVERPL. Polar residues predominate over residues 260–269; the sequence is PTSSSSNGTA.

It belongs to the CCZ1 family. As to quaternary structure, interacts with MON1.

It is found in the endosome. The protein resides in the prevacuolar compartment. In terms of biological role, plays an important role in membrane trafficking through the secretory apparatus. In complex with MON1, acts as a guanine exchange factor (GEF) for Rab7 protein family. Promotes the exchange of GDP to GTP, converting it from an inactive GDP-bound form into an active GTP-bound form. The active form is involved in protein trafficking from prevacuolar compartments (PVCs) to vacuoles. May serve as a linker between Rab5 and Rab7 protein families in PVCs and mediate PVC maturation. The polypeptide is Vacuolar fusion protein CCZ1 homolog (Oryza sativa subsp. japonica (Rice)).